The chain runs to 600 residues: NADH-quinone oxidoreductase subunit C/D (600 aa).

Residues 1–190 (MVNNMTDLTA…DPFELTKAKQ (190 aa)) are NADH dehydrogenase I subunit C. An NADH dehydrogenase I subunit D region spans residues 214-600 (DFMFLNLGPN…IDFVMSDVDR (387 aa)).

In the N-terminal section; belongs to the complex I 30 kDa subunit family. It in the C-terminal section; belongs to the complex I 49 kDa subunit family. NDH-1 is composed of 13 different subunits. Subunits NuoB, CD, E, F, and G constitute the peripheral sector of the complex.

Its subcellular location is the cell inner membrane. It catalyses the reaction a quinone + NADH + 5 H(+)(in) = a quinol + NAD(+) + 4 H(+)(out). In terms of biological role, NDH-1 shuttles electrons from NADH, via FMN and iron-sulfur (Fe-S) centers, to quinones in the respiratory chain. The immediate electron acceptor for the enzyme in this species is believed to be ubiquinone. Couples the redox reaction to proton translocation (for every two electrons transferred, four hydrogen ions are translocated across the cytoplasmic membrane), and thus conserves the redox energy in a proton gradient. The chain is NADH-quinone oxidoreductase subunit C/D from Citrobacter koseri (strain ATCC BAA-895 / CDC 4225-83 / SGSC4696).